Consider the following 418-residue polypeptide: L-rhamnose isomerase (418 aa).

Residues His-262, Asp-294, and Asp-296 each contribute to the Mn(2+) site.

This sequence belongs to the rhamnose isomerase family. The cofactor is Mn(2+).

It localises to the cytoplasm. It carries out the reaction L-rhamnopyranose = L-rhamnulose. It functions in the pathway carbohydrate degradation; L-rhamnose degradation; glycerone phosphate from L-rhamnose: step 1/3. Catalyzes the interconversion of L-rhamnose and L-rhamnulose. The chain is L-rhamnose isomerase from Bacteroides thetaiotaomicron (strain ATCC 29148 / DSM 2079 / JCM 5827 / CCUG 10774 / NCTC 10582 / VPI-5482 / E50).